A 546-amino-acid chain; its full sequence is Chaperonin GroEL 1 (546 aa).

ATP contacts are provided by residues 30–33, Lys51, 87–91, Gly415, 479–481, and Asp495; these read TLGP, DGTTT, and NAA. Residues 526-546 are disordered; the sequence is KEDAPMPGGMPGGMGGMGMDM. Residues 534-546 are compositionally biased toward gly residues; sequence GMPGGMGGMGMDM.

It belongs to the chaperonin (HSP60) family. As to quaternary structure, forms a cylinder of 14 subunits composed of two heptameric rings stacked back-to-back. Interacts with the co-chaperonin GroES.

It is found in the cytoplasm. The catalysed reaction is ATP + H2O + a folded polypeptide = ADP + phosphate + an unfolded polypeptide.. Functionally, together with its co-chaperonin GroES, plays an essential role in assisting protein folding. The GroEL-GroES system forms a nano-cage that allows encapsulation of the non-native substrate proteins and provides a physical environment optimized to promote and accelerate protein folding. This Burkholderia pseudomallei (strain K96243) protein is Chaperonin GroEL 1.